The following is a 253-amino-acid chain: Beta-crystallin B1 (253 aa).

Low complexity predominate over residues 1-18; that stretch reads MSQPAAKASATAAVNPGP. Residues 1–53 are disordered; that stretch reads MSQPAAKASATAAVNPGPDGKGKAGPPPGPAPGSGPAPAPAPAPAQPAPAAKA. Position 2 is an N-acetylserine (S2). The N-terminal arm stretch occupies residues 2–59; the sequence is SQPAAKASATAAVNPGPDGKGKAGPPPGPAPGSGPAPAPAPAPAQPAPAAKAELPPGS. The span at 25-47 shows a compositional bias: pro residues; that stretch reads GPPPGPAPGSGPAPAPAPAPAQP. Beta/gamma crystallin 'Greek key' domains follow at residues 60–99 and 100–144; these read YKLV…IVTS and GPWV…RPIK. Residues 145-149 form a connecting peptide region; that stretch reads MDAQE. Beta/gamma crystallin 'Greek key' domains follow at residues 150-191 and 192-234; these read HKLC…RVSS and GTWV…RRLR. The C-terminal arm stretch occupies residues 236–253; sequence RQWHREGCFPVLAAEPPK.

It belongs to the beta/gamma-crystallin family. Homo/heterodimer, or complexes of higher-order. The structure of beta-crystallin oligomers seems to be stabilized through interactions between the N-terminal arms. In terms of processing, specific cleavages in the N-terminal arm occur during lens maturation and give rise to truncated forms, leading to impaired oligomerization and protein insolubilization.

Its function is as follows. Crystallins are the dominant structural components of the vertebrate eye lens. The polypeptide is Beta-crystallin B1 (CRYBB1) (Bos taurus (Bovine)).